Here is a 227-residue protein sequence, read N- to C-terminus: MSTAIVVFSGGQDSTTCLIQALTQYDHVHCITFDYGQRHNQEIEVAKKVAIELGAASHKVMDVGLLNELAVSSLTRDNIPVSHELQENGLPNSFVPGRNILFLTLAGIYAYQLGAEAVLTGVCETDFSGYPDCRDEFVKSINQSLVLGMDRQLEIKTPLMWLNKAETWALADKYGKLDYVRNHTLTCYNGVIGDGCGDCPSCDLRKNGLDAYLENKESVMADLESKL.

ATP is bound at residue phenylalanine 8 to leucine 18. Positions 187, 196, 199, and 202 each coordinate Zn(2+).

This sequence belongs to the QueC family. The cofactor is Zn(2+).

The enzyme catalyses 7-carboxy-7-deazaguanine + NH4(+) + ATP = 7-cyano-7-deazaguanine + ADP + phosphate + H2O + H(+). Its pathway is purine metabolism; 7-cyano-7-deazaguanine biosynthesis. Functionally, catalyzes the ATP-dependent conversion of 7-carboxy-7-deazaguanine (CDG) to 7-cyano-7-deazaguanine (preQ(0)). The polypeptide is 7-cyano-7-deazaguanine synthase (Aliivibrio fischeri (strain MJ11) (Vibrio fischeri)).